Consider the following 235-residue polypeptide: MRRSMKRRRRRRPVAPATAARGGDFRAEDGAGLEAREEKVVYSRSQLSLADSTKALGDAFKLFMPRSTEFMSSDAELWSFLCSLKHQFSPHILRSKDVYGYSSCRALVPDPPGPPTARGQARRPVPRAAARRRRRGARAAAARRRKPRPPPPPPPPPEESCPAKPVAPGPCFGGRTLEEIWRAATPTLTTFPTIRVGSDVWGERSLAAARRRARQVLRVNLEPMVRLRRFPVPRA.

Basic residues predominate over residues 1 to 13; the sequence is MRRSMKRRRRRRP. The segment at 1–30 is disordered; that stretch reads MRRSMKRRRRRRPVAPATAARGGDFRAEDG. Residues Ser52 and Ser89 each carry the phosphoserine modification. A disordered region spans residues 109 to 167; the sequence is PDPPGPPTARGQARRPVPRAAARRRRRGARAAAARRRKPRPPPPPPPPPEESCPAKPVA. A compositionally biased stretch (basic residues) spans 120–148; the sequence is QARRPVPRAAARRRRRGARAAAARRRKPR. The span at 149–159 shows a compositional bias: pro residues; that stretch reads PPPPPPPPPEE. Position 185 is a phosphothreonine (Thr185). Ser198 bears the Phosphoserine mark.

The chain is Coiled-coil domain-containing protein 71L (CCDC71L) from Homo sapiens (Human).